The sequence spans 211 residues: SOSS complex subunit B2 (211 aa).

The OB DNA-binding region spans 27–97 (IVLEIGRVTK…TLYTGRGGDL (71 aa)). The disordered stretch occupies residues 125–211 (NQQNKTSKEQ…GRDPRRASKR (87 aa)). A compositionally biased stretch (polar residues) spans 136–157 (GNSPPNQNAGNGTVPVFSNNNA). A compositionally biased stretch (pro residues) spans 179–195 (NGPPPVTAGGTPAPPKP).

The protein belongs to the SOSS-B family. SOSS-B2 subfamily. As to quaternary structure, component of the SOSS complex, composed of soss-b (soss-b1/nabp2 or soss-b2/nabp1), soss-a/ints3 and soss-c/inip. SOSS complexes containing soss-b1/nabp2 are more abundant than complexes containing soss-b2/nabp1.

It localises to the nucleus. Component of the SOSS complex, a multiprotein complex that functions downstream of the MRN complex to promote DNA repair and G2/M checkpoint. In the SOSS complex, acts as a sensor of single-stranded DNA that binds to single-stranded DNA. The SOSS complex associates with DNA lesions and influences diverse endpoints in the cellular DNA damage response including cell-cycle checkpoint activation, recombinational repair and maintenance of genomic stability. Required for efficient homologous recombination-dependent repair of double-strand breaks (DSBs). In Danio rerio (Zebrafish), this protein is SOSS complex subunit B2 (nabp1).